A 264-amino-acid chain; its full sequence is MRLRPLPLVVVPGLLQLLFCDSEKVVHATEGLDWEDKDATGTLVGNVVHSRIINPLRLFVKQSPVPKPGHLAYADSMENFWDWLANITEVQEPLARTKRRPIVKTGKFKKMFGWGDFHSNIKTVKLNLLITGKIVDHGNGTFSVYFRHNSTGLGNVSVSLVPPSKVVEFEVSPQSTLETKESKSFNCRIEYEKTDRAKKTALCNFDPSKICYQEQTQSHVSWLCSKPFKVICIYIAFYSVDYKLVQKVCPDYNYHSETPYLSSG.

A signal peptide spans Met1–Ser22. The II stretch occupies residues Glu23–Val90. N-linked (GlcNAc...) asparagine glycans are attached at residues Asn86, Asn139, Asn149, and Asn155. The tract at residues Gln91 to Phe169 is III. The interval Glu170 to Glu178 is IV (linker domain). Residues Thr179–Gly264 form a v (Cys-rich) region.

It belongs to the neurexophilin family. Post-translationally, may be proteolytically processed at the boundary between the N-terminal non-conserved and the central conserved domain in neuron-like cells. In terms of tissue distribution, brain, only in a scattered subpopulation of neurons that probably represent inhibitory interneurons.

It is found in the secreted. Its function is as follows. May be signaling molecules that resemble neuropeptides and that act by binding to alpha-neurexins and possibly other receptors. This Bos taurus (Bovine) protein is Neurexophilin-2 (NXPH2).